Consider the following 130-residue polypeptide: Small ribosomal subunit protein uS9 (130 aa).

It belongs to the universal ribosomal protein uS9 family.

This Aster yellows witches'-broom phytoplasma (strain AYWB) protein is Small ribosomal subunit protein uS9.